The chain runs to 379 residues: Glutamate 5-kinase (379 aa).

An ATP-binding site is contributed by lysine 15. Serine 59, aspartate 146, and asparagine 158 together coordinate substrate. Residue 178 to 179 (TD) participates in ATP binding. One can recognise a PUA domain in the interval 285-363 (RGAVTVDVGA…SEFERLLGYS (79 aa)).

It belongs to the glutamate 5-kinase family.

Its subcellular location is the cytoplasm. The enzyme catalyses L-glutamate + ATP = L-glutamyl 5-phosphate + ADP. Its pathway is amino-acid biosynthesis; L-proline biosynthesis; L-glutamate 5-semialdehyde from L-glutamate: step 1/2. Functionally, catalyzes the transfer of a phosphate group to glutamate to form L-glutamate 5-phosphate. The polypeptide is Glutamate 5-kinase (Paracidovorax citrulli (strain AAC00-1) (Acidovorax citrulli)).